Here is a 297-residue protein sequence, read N- to C-terminus: Thiosulfate sulfurtransferase (297 aa).

K14 carries the post-translational modification N6-acetyllysine; alternate. K14 carries the N6-succinyllysine; alternate modification. The region spanning 25 to 143 (VGPGLRVLDA…WLKEGHPVTS (119 aa)) is the Rhodanese 1 domain. S35 is a glycosylation site (O-linked (GlcNAc) serine). A Phosphoserine modification is found at S38. An N6-acetyllysine; alternate modification is found at K136. K136 bears the N6-succinyllysine; alternate mark. Positions 144-159 (EPSRPEPAIFKATLNR) are hinge. K163 carries the post-translational modification N6-acetyllysine. The region spanning 173-288 (ESKRFQLVDS…WFHRAPPETW (116 aa)) is the Rhodanese 2 domain. Residue K175 is modified to N6-acetyllysine; alternate. The residue at position 175 (K175) is an N6-succinyllysine; alternate. R187 lines the substrate pocket. Residue K224 is modified to N6-acetyllysine; alternate. The residue at position 224 (K224) is an N6-succinyllysine; alternate. An N6-acetyllysine modification is found at K236. At K237 the chain carries N6-acetyllysine; alternate. K237 bears the N6-succinyllysine; alternate mark. The active-site Cysteine persulfide intermediate is C248. K250 is a substrate binding site.

As to quaternary structure, monomer. Expressed in numerous tissues.

The protein localises to the mitochondrion matrix. It catalyses the reaction thiosulfate + hydrogen cyanide = thiocyanate + sulfite + 2 H(+). In terms of biological role, together with MRPL18, acts as a mitochondrial import factor for the cytosolic 5S rRNA. Only the nascent unfolded cytoplasmic form is able to bind to the 5S rRNA. Formation of iron-sulfur complexes and cyanide detoxification. Binds molecular oxygen and sulfur. The chain is Thiosulfate sulfurtransferase (TST) from Bos taurus (Bovine).